We begin with the raw amino-acid sequence, 1210 residues long: Epidermal growth factor receptor (1210 aa).

Residues 1-24 (MRPSGTAGAALLALLAALCPASRA) form the signal peptide. At 25-645 (LEEKKVCQGT…CPTNGPKIPS (621 aa)) the chain is on the extracellular side. The cysteines at positions 31 and 58 are disulfide-linked. The N-linked (GlcNAc...) (complex) asparagine; atypical; partial glycan is linked to asparagine 56. N-linked (GlcNAc...) asparagine; atypical glycosylation is present at asparagine 73. The stretch at 75–300 (DLSFLKTIQE…CVKKCPRNYV (226 aa)) is one Approximate repeat. 3 N-linked (GlcNAc...) asparagine glycosylation sites follow: asparagine 128, asparagine 175, and asparagine 196. Cystine bridges form between cysteine 157–cysteine 187, cysteine 190–cysteine 199, cysteine 194–cysteine 207, cysteine 215–cysteine 223, cysteine 219–cysteine 231, cysteine 232–cysteine 240, cysteine 236–cysteine 248, cysteine 251–cysteine 260, cysteine 264–cysteine 291, cysteine 295–cysteine 307, cysteine 311–cysteine 326, cysteine 329–cysteine 333, and cysteine 337–cysteine 362. The residue at position 229 (serine 229) is a Phosphoserine. Residues asparagine 352, asparagine 361, asparagine 413, and asparagine 444 are each glycosylated (N-linked (GlcNAc...) asparagine). The Approximate repeat unit spans residues 390 to 600 (QELDILKTVK…CVKTCPAGVM (211 aa)). 11 cysteine pairs are disulfide-bonded: cysteine 470/cysteine 499, cysteine 506/cysteine 515, cysteine 510/cysteine 523, cysteine 526/cysteine 535, cysteine 539/cysteine 555, cysteine 558/cysteine 571, cysteine 562/cysteine 579, cysteine 582/cysteine 591, cysteine 595/cysteine 617, cysteine 620/cysteine 628, and cysteine 624/cysteine 636. Residue asparagine 528 is glycosylated (N-linked (GlcNAc...) asparagine). N-linked (GlcNAc...) asparagine; partial glycosylation occurs at asparagine 568. The N-linked (GlcNAc...) asparagine; partial glycan is linked to asparagine 603. Asparagine 623 carries N-linked (GlcNAc...) (high mannose) asparagine glycosylation. Residues 646–668 (IATGMVGALLLLLVVALGIGLFM) traverse the membrane as a helical segment. Over 669–1210 (RRRHIVRKRT…APQSSEFIGA (542 aa)) the chain is Cytoplasmic. Threonine 678 bears the Phosphothreonine; by PKC and PKD/PRKD1 mark. An important for dimerization, phosphorylation and activation region spans residues 688 to 704 (LVEPLTPSGEAPNQALL). Position 693 is a phosphothreonine; by PKD/PRKD1 (threonine 693). At serine 695 the chain carries Phosphoserine. In terms of domain architecture, Protein kinase spans 712 to 979 (FKKIKVLGSG…KMARDPQRYL (268 aa)). Lysine 716 is covalently cross-linked (Glycyl lysine isopeptide (Lys-Gly) (interchain with G-Cter in ubiquitin)). An ATP-binding site is contributed by 718-726 (LGSGAFGTV). Lysine 737 participates in a covalent cross-link: Glycyl lysine isopeptide (Lys-Gly) (interchain with G-Cter in ubiquitin). Residue lysine 745 participates in ATP binding. Lysine 745 bears the N6-(2-hydroxyisobutyryl)lysine mark. Residues lysine 754 and lysine 757 each participate in a glycyl lysine isopeptide (Lys-Gly) (interchain with G-Cter in ubiquitin) cross-link. Residue 790-791 (TQ) coordinates ATP. The active-site Proton acceptor is the aspartate 837. An ATP-binding site is contributed by aspartate 855. A Glycyl lysine isopeptide (Lys-Gly) (interchain with G-Cter in ubiquitin) cross-link involves residue lysine 867. Tyrosine 869 is modified (phosphotyrosine). Glycyl lysine isopeptide (Lys-Gly) (interchain with G-Cter in ubiquitin) cross-links involve residues lysine 929, lysine 960, and lysine 970. A phosphoserine mark is found at serine 991 and serine 995. Phosphotyrosine; by autocatalysis is present on residues tyrosine 998 and tyrosine 1016. Phosphoserine is present on residues serine 1026 and serine 1039. Threonine 1041 is subject to Phosphothreonine. Position 1042 is a phosphoserine (serine 1042). The S-palmitoyl cysteine moiety is linked to residue cysteine 1049. Residue serine 1064 is modified to Phosphoserine. A Phosphotyrosine modification is found at tyrosine 1069. Phosphoserine is present on residues serine 1070, serine 1071, and serine 1081. Tyrosine 1092 and tyrosine 1110 each carry phosphotyrosine; by autocatalysis. The tract at residues 1097 to 1137 (VPKRPAGSVQNPVYHNQPLNPAPSRDPHYQDPHSTAVGNPE) is disordered. Composition is skewed to polar residues over residues 1104-1115 (SVQNPVYHNQPL) and 1128-1137 (PHSTAVGNPE). Cysteine 1146 is lipidated: S-palmitoyl cysteine. Phosphoserine is present on serine 1166. 2 positions are modified to phosphotyrosine; by autocatalysis: tyrosine 1172 and tyrosine 1197. Omega-N-methylarginine is present on arginine 1199.

Belongs to the protein kinase superfamily. Tyr protein kinase family. EGF receptor subfamily. As to quaternary structure, binding of the ligand triggers homo- and/or heterodimerization of the receptor triggering its autophosphorylation. Heterodimer with ERBB2. Forms a complex with CCDC88A/GIV (via SH2-like regions) and GNAI3 which leads to enhanced EGFR signaling and triggering of cell migration; binding to CCDC88A requires autophosphorylation of the EGFR C-terminal region, and ligand stimulation is required for recruitment of GNAI3 to the complex. Interacts with ERRFI1; inhibits dimerization of the kinase domain and autophosphorylation. Part of a complex with ERBB2 and either PIK3C2A or PIK3C2B. Interacts with GRB2; an adapter protein coupling the receptor to downstream signaling pathways. Interacts with GAB2; involved in signaling downstream of EGFR. Interacts with STAT3; mediates EGFR downstream signaling in cell proliferation. Interacts with RIPK1; involved in NF-kappa-B activation. Interacts (autophosphorylated) with CBL, CBLB and CBLC; involved in EGFR ubiquitination and regulation; interaction with CBL is reduced in the presence of tensin TNS4. Interacts with SOCS5; regulates EGFR degradation through ELOC- and ELOB-mediated ubiquitination and proteasomal degradation. Interacts with PRMT5; methylates EGFR and enhances interaction with PTPN6. Interacts (phosphorylated) with PTPN6; inhibits EGFR-dependent activation of MAPK/ERK. Interacts with COPG1; essential for regulation of EGF-dependent nuclear transport of EGFR by retrograde trafficking from the Golgi to the ER. Interacts with TNK2; this interaction is dependent on EGF stimulation and kinase activity of EGFR. Interacts with PCNA; positively regulates PCNA. Interacts with PELP1. Interacts with MUC1. Interacts with AP2M1. Interacts with FER. May interact with EPS8; mediates EPS8 phosphorylation. Interacts (via SH2 domains) with GRB2, NCK1 and NCK2. Interacts with ATXN2. Interacts with GAREM1. Interacts (ubiquitinated) with ANKRD13A/B/D; the interaction is direct and may regulate EGFR internalization after EGF stimulation. Interacts with GPER1; the interaction occurs in an estrogen-dependent manner. Interacts (via C-terminal cytoplasmic kinase domain) with ZPR1 (via zinc fingers). Interacts with RNF115 and RNF126. Interacts with GPRC5A (via its transmembrane domain). Interacts with FAM83B; positively regulates EGFR inducing its autophosphorylation in absence of stimulation by EGF. Interacts with LAPTM4B; positively correlates with EGFR activation. Interacts with STX19. Interacts with CD44. Interacts with PGRMC1; the interaction requires PGRMC1 homodimerization. Interacts with PIKFYVE. Interacts with NEU3. Interacts with TRAF4. Interacts with the ant venom OMEGA-myrmeciitoxin(02)-Mg1a. Interacts with CD82; this interaction facilitates ligand-induced endocytosis of the receptor and its subsequent desensitization. Phosphorylated on Tyr residues in response to EGF. Phosphorylation at Ser-695 is partial and occurs only if Thr-693 is phosphorylated. Phosphorylation at Thr-678 and Thr-693 by PRKD1 inhibits EGF-induced MAPK8/JNK1 activation. Dephosphorylation by PTPRJ prevents endocytosis and stabilizes the receptor at the plasma membrane. Autophosphorylation at Tyr-1197 is stimulated by methylation at Arg-1199 and enhances interaction with PTPN6. Autophosphorylation at Tyr-1092 and/or Tyr-1110 recruits STAT3. Dephosphorylated by PTPN1 and PTPN2. In terms of processing, monoubiquitinated and polyubiquitinated upon EGF stimulation; which does not affect tyrosine kinase activity or signaling capacity but may play a role in lysosomal targeting. Polyubiquitin linkage is mainly through 'Lys-63', but linkage through 'Lys-48', 'Lys-11' and 'Lys-29' also occurs. Deubiquitination by OTUD7B prevents degradation. Ubiquitinated by RNF115 and RNF126. Ubiquitinated by ZNRF1 or CBL at different lysines in response to EGF stimulation; leading to recruitment of the ESCRT machinery and subsequent degradation in the lysosomes. Deubiquitinated by UCHL1 leading to the inhibition of its degradation. Post-translationally, palmitoylated on Cys residues by ZDHHC20. Palmitoylation inhibits internalization after ligand binding, and increases the persistence of tyrosine-phosphorylated EGFR at the cell membrane. Palmitoylation increases the amplitude and duration of EGFR signaling. Methylated. Methylation at Arg-1199 by PRMT5 stimulates phosphorylation at Tyr-1197. Ubiquitously expressed. Isoform 2 is also expressed in ovarian cancers.

The protein resides in the cell membrane. It localises to the endoplasmic reticulum membrane. It is found in the golgi apparatus membrane. Its subcellular location is the nucleus membrane. The protein localises to the endosome. The protein resides in the endosome membrane. It localises to the nucleus. It is found in the secreted. It carries out the reaction L-tyrosyl-[protein] + ATP = O-phospho-L-tyrosyl-[protein] + ADP + H(+). Endocytosis and inhibition of the activated EGFR by phosphatases like PTPRJ and PTPRK constitute immediate regulatory mechanisms. Upon EGF-binding phosphorylates EPS15 that regulates EGFR endocytosis and activity. Moreover, inducible feedback inhibitors including LRIG1, SOCS4, SOCS5 and ERRFI1 constitute alternative regulatory mechanisms for the EGFR signaling. Up-regulated by NEU3-mediated desialylation of N-linked glycan at Asn-528. Receptor tyrosine kinase binding ligands of the EGF family and activating several signaling cascades to convert extracellular cues into appropriate cellular responses. Known ligands include EGF, TGFA/TGF-alpha, AREG, epigen/EPGN, BTC/betacellulin, epiregulin/EREG and HBEGF/heparin-binding EGF. Ligand binding triggers receptor homo- and/or heterodimerization and autophosphorylation on key cytoplasmic residues. The phosphorylated receptor recruits adapter proteins like GRB2 which in turn activates complex downstream signaling cascades. Activates at least 4 major downstream signaling cascades including the RAS-RAF-MEK-ERK, PI3 kinase-AKT, PLCgamma-PKC and STATs modules. May also activate the NF-kappa-B signaling cascade. Also directly phosphorylates other proteins like RGS16, activating its GTPase activity and probably coupling the EGF receptor signaling to the G protein-coupled receptor signaling. Also phosphorylates MUC1 and increases its interaction with SRC and CTNNB1/beta-catenin. Positively regulates cell migration via interaction with CCDC88A/GIV which retains EGFR at the cell membrane following ligand stimulation, promoting EGFR signaling which triggers cell migration. Plays a role in enhancing learning and memory performance. Plays a role in mammalian pain signaling (long-lasting hypersensitivity). Its function is as follows. Isoform 2 may act as an antagonist of EGF action. In terms of biological role, (Microbial infection) Acts as a receptor for hepatitis C virus (HCV) in hepatocytes and facilitates its cell entry. Mediates HCV entry by promoting the formation of the CD81-CLDN1 receptor complexes that are essential for HCV entry and by enhancing membrane fusion of cells expressing HCV envelope glycoproteins. The polypeptide is Epidermal growth factor receptor (Homo sapiens (Human)).